The sequence spans 392 residues: Chaperone protein DnaJ 1 (392 aa).

The J domain maps to 4–67; the sequence is DYYEILGVSH…QKRAVFDRGG (64 aa). The CR-type zinc finger occupies 134–216; it reads GVTKSLEVDT…CSGEGRVRTT (83 aa). Zn(2+)-binding residues include Cys-147, Cys-150, Cys-164, Cys-167, Cys-190, Cys-193, Cys-204, and Cys-207. CXXCXGXG motif repeat units lie at residues 147–154, 164–171, 190–197, and 204–211; these read CPKCQGKG, CDTCQGRG, CPTCHGYG, and CQECSGEG. The segment at 367-392 is disordered; that stretch reads ETNASASVEKSGGRGMFSRIKEAFGG.

The protein belongs to the DnaJ family. As to quaternary structure, homodimer. The cofactor is Zn(2+).

The protein resides in the cytoplasm. In terms of biological role, participates actively in the response to hyperosmotic and heat shock by preventing the aggregation of stress-denatured proteins and by disaggregating proteins, also in an autonomous, DnaK-independent fashion. Unfolded proteins bind initially to DnaJ; upon interaction with the DnaJ-bound protein, DnaK hydrolyzes its bound ATP, resulting in the formation of a stable complex. GrpE releases ADP from DnaK; ATP binding to DnaK triggers the release of the substrate protein, thus completing the reaction cycle. Several rounds of ATP-dependent interactions between DnaJ, DnaK and GrpE are required for fully efficient folding. Also involved, together with DnaK and GrpE, in the DNA replication of plasmids through activation of initiation proteins. The chain is Chaperone protein DnaJ 1 from Cutibacterium acnes (strain DSM 16379 / KPA171202) (Propionibacterium acnes).